The primary structure comprises 180 residues: Large ribosomal subunit protein uL5 (180 aa).

The protein belongs to the universal ribosomal protein uL5 family. Part of the 50S ribosomal subunit; part of the 5S rRNA/L5/L18/L25 subcomplex. Contacts the 5S rRNA and the P site tRNA. Forms a bridge to the 30S subunit in the 70S ribosome.

Functionally, this is one of the proteins that bind and probably mediate the attachment of the 5S RNA into the large ribosomal subunit, where it forms part of the central protuberance. In the 70S ribosome it contacts protein S13 of the 30S subunit (bridge B1b), connecting the 2 subunits; this bridge is implicated in subunit movement. Contacts the P site tRNA; the 5S rRNA and some of its associated proteins might help stabilize positioning of ribosome-bound tRNAs. The protein is Large ribosomal subunit protein uL5 of Chloroflexus aurantiacus (strain ATCC 29364 / DSM 637 / Y-400-fl).